Consider the following 105-residue polypeptide: Large ribosomal subunit protein bL21 (105 aa).

It belongs to the bacterial ribosomal protein bL21 family. Part of the 50S ribosomal subunit. Contacts protein L20.

Functionally, this protein binds to 23S rRNA in the presence of protein L20. The sequence is that of Large ribosomal subunit protein bL21 from Phocaeicola vulgatus (strain ATCC 8482 / DSM 1447 / JCM 5826 / CCUG 4940 / NBRC 14291 / NCTC 11154) (Bacteroides vulgatus).